The sequence spans 426 residues: O-methyltransferase pyvH (426 aa).

S-adenosyl-L-methionine-binding positions include 258–259 (GG), Asp-281, 308–309 (DF), and Arg-323. The active-site Proton acceptor is His-327.

Belongs to the class I-like SAM-binding methyltransferase superfamily. Cation-independent O-methyltransferase family.

Its pathway is secondary metabolite biosynthesis. In terms of biological role, O-methyltransferase; part of the gene cluster that mediates the biosynthesis of pyranoviolin A, a pyranonigrin analog with a C-3 methoxy group. Initially, the PKS portion of pyvA synthesizes C-10 carbon chain from 5 molecules of malonyl-CoA, which is then condensed with the thiolation (T) domain-bound glycine activated by the adenylation (A) domain. The subsequent chain release by Dieckmann condensation (DKC) could be catalyzed by the TE domain present at the C-terminus of pyvA and/or the alpha/beta hydrolase pyvD, installing the tetramic acid moiety. The FAD-dependent monooxygenase pyvC next epoxidizes one of the olefins of the polyketide part, and the epoxide ring-opening induces the dihydro-gamma-pyrone ring formation. The cytochrome P450 monooxygeanse pyvB would be responsible for the 2 consecutive reactions, in which the dihydro-gamma-pyrone is oxidized to gamma-pyrone and C-7 is hydroxylated to yield pyranonigrin F. Finally, the O-methyltransferase pyvH methylates the C-3 hydroxy group to complete the biosynthesis. The chain is O-methyltransferase pyvH from Aspergillus violaceofuscus (strain CBS 115571).